A 432-amino-acid chain; its full sequence is Cytochrome c biogenesis protein CcsB (432 aa).

The next 3 membrane-spanning stretches (helical) occupy residues L18 to I38, S76 to R96, and V166 to A186.

It belongs to the Ccs1/CcsB family. As to quaternary structure, may interact with CcsA.

Its subcellular location is the cellular thylakoid membrane. Required during biogenesis of c-type cytochromes (cytochrome c6 and cytochrome f) at the step of heme attachment. This chain is Cytochrome c biogenesis protein CcsB, found in Synechococcus sp. (strain CC9605).